Here is a 358-residue protein sequence, read N- to C-terminus: Magnesium-protoporphyrin IX monomethyl ester [oxidative] cyclase 2 (358 aa).

Belongs to the AcsF family. Requires Fe cation as cofactor.

The catalysed reaction is Mg-protoporphyrin IX 13-monomethyl ester + 3 NADPH + 3 O2 + 2 H(+) = 3,8-divinyl protochlorophyllide a + 3 NADP(+) + 5 H2O. Its pathway is porphyrin-containing compound metabolism; chlorophyll biosynthesis (light-independent). In terms of biological role, catalyzes the formation of the isocyclic ring in chlorophyll biosynthesis. Mediates the cyclase reaction, which results in the formation of divinylprotochlorophyllide (Pchlide) characteristic of all chlorophylls from magnesium-protoporphyrin IX 13-monomethyl ester (MgPMME). The polypeptide is Magnesium-protoporphyrin IX monomethyl ester [oxidative] cyclase 2 (Synechocystis sp. (strain ATCC 27184 / PCC 6803 / Kazusa)).